The primary structure comprises 64 residues: Large ribosomal subunit protein uL29 (64 aa).

Belongs to the universal ribosomal protein uL29 family.

This chain is Large ribosomal subunit protein uL29, found in Synechococcus elongatus (strain ATCC 33912 / PCC 7942 / FACHB-805) (Anacystis nidulans R2).